We begin with the raw amino-acid sequence, 318 residues long: MSDASFNASTARAAHRPDEAGFGDYFALLKPRVMSLVVFTALVGLVAAPVSVHPFIGFCAILFIAIGGGASGALNMWWDADIDQVMKRTKKRPIPAGKVEPGEALALGLGLSGLSVMMLALATNVLAGAFLAFTIFFYVVVYTMWLKRTTPQNIVIGGAAGAFPPVIGWIAATGDMSVEPWLMFALTFMWTPPHFWALALFMRSDYDDAGVPMLTVTHGRRATRVHILIYTILLALLALGTAFSNIGGPIYLAVALVLNALFLLGAIRIWRRDEADSEADNFKTERGFFKLSLLYLFLHFGAILAEALLRPYGLGGWG.

9 consecutive transmembrane segments (helical) span residues 33–53 (VMSLVVFTALVGLVAAPVSVH), 54–74 (PFIGFCAILFIAIGGGASGAL), 102–122 (GEALALGLGLSGLSVMMLALA), 125–145 (VLAGAFLAFTIFFYVVVYTMW), 154–174 (IVIGGAAGAFPPVIGWIAATG), 181–201 (WLMFALTFMWTPPHFWALALF), 225–245 (VHILIYTILLALLALGTAFSN), 246–266 (IGGPIYLAVALVLNALFLLGA), and 288–308 (FFKLSLLYLFLHFGAILAEAL).

It belongs to the UbiA prenyltransferase family. Protoheme IX farnesyltransferase subfamily. Interacts with CtaA.

The protein localises to the cell inner membrane. The catalysed reaction is heme b + (2E,6E)-farnesyl diphosphate + H2O = Fe(II)-heme o + diphosphate. Its pathway is porphyrin-containing compound metabolism; heme O biosynthesis; heme O from protoheme: step 1/1. Its function is as follows. Converts heme B (protoheme IX) to heme O by substitution of the vinyl group on carbon 2 of heme B porphyrin ring with a hydroxyethyl farnesyl side group. The sequence is that of Protoheme IX farnesyltransferase from Ruegeria pomeroyi (strain ATCC 700808 / DSM 15171 / DSS-3) (Silicibacter pomeroyi).